We begin with the raw amino-acid sequence, 217 residues long: Large ribosomal subunit protein uL1 (217 aa).

Belongs to the universal ribosomal protein uL1 family. In terms of assembly, component of the large ribosomal subunit.

It is found in the cytoplasm. Functionally, component of the large ribosomal subunit. The ribosome is a large ribonucleoprotein complex responsible for the synthesis of proteins in the cell. The protein is Large ribosomal subunit protein uL1 (rpl10a) of Xenopus laevis (African clawed frog).